Consider the following 419-residue polypeptide: Ribosome biogenesis protein WDR12 homolog (419 aa).

The ubiquitin-like (UBL) domain stretch occupies residues 10-91 (VQVHLKTKQE…EDAIDIEYVE (82 aa)). 7 WD repeats span residues 103–140 (LHDD…KLTI), 142–184 (GHTA…NAVE), 191–230 (GHER…TSEG), 249–287 (GHRE…IKTE), 289–328 (STNK…GSVV), 334–374 (GHNA…APLY), and 378–416 (GHGE…IENM).

This sequence belongs to the WD repeat WDR12/YTM1 family.

It localises to the nucleus. It is found in the nucleolus. The protein resides in the nucleoplasm. In terms of biological role, required for maturation of ribosomal RNAs and formation of the large ribosomal subunit. The sequence is that of Ribosome biogenesis protein WDR12 homolog from Drosophila virilis (Fruit fly).